Reading from the N-terminus, the 482-residue chain is C3a anaphylatoxin chemotactic receptor (482 aa).

The Extracellular portion of the chain corresponds to 1 to 23 (MASFSAETNSTDLLSQPWNEPPV). Residue Asn-9 is glycosylated (N-linked (GlcNAc...) asparagine). The chain crosses the membrane as a helical span at residues 24-46 (ILSMVILSLTFLLGLPGNGLVLW). At 47–57 (VAGLKMQRTVN) the chain is on the cytoplasmic side. Residues 58-80 (TIWFLHLTLADLLCCLSLPFSLA) traverse the membrane as a helical segment. Residues 81-96 (HLALQGQWPYGRFLCK) lie on the Extracellular side of the membrane. Cys-95 and Cys-172 are disulfide-bonded. Residues 97–118 (LIPSIIVLNMFASVFLLTAISL) form a helical membrane-spanning segment. At 119–139 (DRCLVVFKPIWCQNHRNVGMA) the chain is on the cytoplasmic side. A helical membrane pass occupies residues 140–160 (CSICGCIWVVAFVMCIPVFVY). At 161–340 (REIFTTDNHN…TPLVAITITR (180 aa)) the chain is on the extracellular side. 2 positions are modified to sulfotyrosine: Tyr-174 and Tyr-184. An N-linked (GlcNAc...) asparagine glycan is attached at Asn-194. O-linked (GalNAc...) serine glycosylation is present at Ser-266. A Sulfotyrosine modification is found at Tyr-318. Residues 341-360 (LVVGFLLPSVIMIACYSFIV) form a helical membrane-spanning segment. Over 361–377 (FRMQRGRFAKSQSKTFR) the chain is Cytoplasmic. The helical transmembrane segment at 378–400 (VAVVVVAVFLVCWTPYHIFGVLS) threads the bilayer. The Extracellular segment spans residues 401–417 (LLTDPETPLGKTLMSWD). The helical transmembrane segment at 418–438 (HVCIALASANSCFNPFLYALL) threads the bilayer. Residues 439–482 (GKDFRKKARQSIQGILEAAFSEELTRSTHCPSNNVISERNSTTV) lie on the Cytoplasmic side of the membrane. The residue at position 459 (Ser-459) is a Phosphoserine. Thr-463 carries the post-translational modification Phosphothreonine.

Belongs to the G-protein coupled receptor 1 family. Interacts with VGF-derived peptide TLQP-21. Among the sulfation sites Tyr-174 is essential for binding of C3a anaphylatoxin. In terms of processing, O-glycosylated. In terms of tissue distribution, widely expressed in several differentiated hematopoietic cell lines, in the lung, spleen, ovary, placenta, small intestine, throughout the brain, heart, and endothelial cells. Mostly expressed in lymphoid tissues.

It is found in the cell membrane. Functionally, receptor for the chemotactic and inflammatory peptide anaphylatoxin C3a. This receptor stimulates chemotaxis, granule enzyme release and superoxide anion production. This chain is C3a anaphylatoxin chemotactic receptor (C3AR1), found in Homo sapiens (Human).